We begin with the raw amino-acid sequence, 231 residues long: MRLSLLVTLALTALIEAHTVMVYPGWRGNNLITNETFPYGMQWMYPCGGMGTSRNRTYWPTTGGAVSFQPGWFRGHLQAQLQINLGYGTDGPDGGPPNMSNIMVKPFMLLGPTNNPYPGTVCLPQVPLPAGANVSAGDRATIQVVEQAQHGASLYSCVDIIFAEPGDPRIPIVNETNCFNSTQFGFAQIYTVTTQEPSLDVIASTTTGSAPRYYSWAGWLPLVAGAIWMAL.

The first 17 residues, 1-17 (MRLSLLVTLALTALIEA), serve as a signal peptide directing secretion. Histidine 18 serves as a coordination point for Cu(2+). Asparagine 34, asparagine 55, asparagine 98, asparagine 133, asparagine 174, and asparagine 180 each carry an N-linked (GlcNAc...) asparagine glycan. Disulfide bonds link cysteine 47/cysteine 157 and cysteine 122/cysteine 178. Isoleucine 202 is lipidated: GPI-anchor amidated isoleucine. A propeptide spans 203–231 (ASTTTGSAPRYYSWAGWLPLVAGAIWMAL) (removed in mature form).

This sequence belongs to the X325 family. The cofactor is Cu(2+).

Its subcellular location is the cell membrane. Lytic polysaccharide monooxygenase-like protein that has diverged to biological functions other than polysaccharide degradation since it does not perform oxidative cleavage of polysaccharides. Acts as a cell surface-bound protein that functions in the copper-accumulation pathway. May also act as the major cell wall sensor that regulates MAP kinase-dependent hyphal anastomosis, the fusion of hyphal cells. This is Lytic polysaccharide monooxygenase-like protein X325 from Hypocrea jecorina (strain QM6a) (Trichoderma reesei).